We begin with the raw amino-acid sequence, 347 residues long: Photosystem II protein D1 (347 aa).

3 helical membrane-spanning segments follow: residues 32 to 49, 121 to 136, and 145 to 159; these read YIGW…LATV, HFIL…EWEF, and WIFV…AASA. His-121 contributes to the chlorophyll a binding site. Pheophytin a is bound at residue Tyr-129. Residues Asp-173 and Glu-192 each coordinate [CaMn4O5] cluster. A helical membrane pass occupies residues 200–221; the sequence is FHILGVAAVFGGSLFSAMHGSL. His-201 is a binding site for chlorophyll a. Residues His-218 and 267–268 contribute to the a quinone site; that span reads SF. His-218 lines the Fe cation pocket. His-275 is a binding site for Fe cation. The chain crosses the membrane as a helical span at residues 277 to 291; the sequence is FLAAWPVIGIWFTAL. [CaMn4O5] cluster is bound by residues His-335, Glu-336, Asp-345, and Ala-347.

Belongs to the reaction center PufL/M/PsbA/D family. As to quaternary structure, PSII is composed of 1 copy each of membrane proteins PsbA, PsbB, PsbC, PsbD, PsbE, PsbF, PsbH, PsbI, PsbJ, PsbK, PsbL, PsbM, PsbT, PsbX, PsbY, PsbZ, Psb30/Ycf12, at least 3 peripheral proteins of the oxygen-evolving complex and a large number of cofactors. It forms dimeric complexes. The cofactor is The D1/D2 heterodimer binds P680, chlorophylls that are the primary electron donor of PSII, and subsequent electron acceptors. It shares a non-heme iron and each subunit binds pheophytin, quinone, additional chlorophylls, carotenoids and lipids. D1 provides most of the ligands for the Mn4-Ca-O5 cluster of the oxygen-evolving complex (OEC). There is also a Cl(-1) ion associated with D1 and D2, which is required for oxygen evolution. The PSII complex binds additional chlorophylls, carotenoids and specific lipids.. In terms of processing, tyr-164 forms a radical intermediate that is referred to as redox-active TyrZ, YZ or Y-Z.

Its subcellular location is the plastid. The protein localises to the chloroplast thylakoid membrane. The catalysed reaction is 2 a plastoquinone + 4 hnu + 2 H2O = 2 a plastoquinol + O2. In terms of biological role, photosystem II (PSII) is a light-driven water:plastoquinone oxidoreductase that uses light energy to abstract electrons from H(2)O, generating O(2) and a proton gradient subsequently used for ATP formation. It consists of a core antenna complex that captures photons, and an electron transfer chain that converts photonic excitation into a charge separation. The D1/D2 (PsbA/PsbD) reaction center heterodimer binds P680, the primary electron donor of PSII as well as several subsequent electron acceptors. The protein is Photosystem II protein D1 of Heterocapsa niei (Dinoflagellate).